Here is a 138-residue protein sequence, read N- to C-terminus: Vesicle transport protein GOT1B (138 aa).

Met-1 is modified (N-acetylmethionine). Residues 1–9 (MISLTDTQK) lie on the Cytoplasmic side of the membrane. The chain crosses the membrane as a helical span at residues 10–30 (IGMGLTGFGVFFLFFGMILFF). The Lumenal portion of the chain corresponds to 31–32 (DK). A helical membrane pass occupies residues 33 to 53 (ALLAIGNVLFVAGLAFVIGLE). The Cytoplasmic segment spans residues 54 to 68 (RTFRFFFQRHKVKAT). Position 90 (Glu-90) is a topological domain, lumenal. A helical transmembrane segment spans residues 91 to 109 (IYGFFLLFRGFFPVVVGFI). At 110-138 (RRVPVLGSLLNLPGIRSFVDKVGESNNMV) the chain is on the cytoplasmic side.

It belongs to the GOT1 family.

The protein resides in the golgi apparatus membrane. Functionally, may be involved in fusion of ER-derived transport vesicles with the Golgi complex. The chain is Vesicle transport protein GOT1B (Golt1b) from Mus musculus (Mouse).